Here is a 184-residue protein sequence, read N- to C-terminus: Endoribonuclease YbeY (184 aa).

Histidine 118, histidine 122, and histidine 128 together coordinate Zn(2+). Residues 156–184 (YHQDRQSQKDQRLLDKSRYFDELNHGDTP) form a disordered region. A compositionally biased stretch (basic and acidic residues) spans 157-184 (HQDRQSQKDQRLLDKSRYFDELNHGDTP).

Belongs to the endoribonuclease YbeY family. Zn(2+) is required as a cofactor.

Its subcellular location is the cytoplasm. Functionally, single strand-specific metallo-endoribonuclease involved in late-stage 70S ribosome quality control and in maturation of the 3' terminus of the 16S rRNA. This chain is Endoribonuclease YbeY, found in Mycolicibacterium vanbaalenii (strain DSM 7251 / JCM 13017 / BCRC 16820 / KCTC 9966 / NRRL B-24157 / PYR-1) (Mycobacterium vanbaalenii).